A 377-amino-acid polypeptide reads, in one-letter code: tRNA pseudouridine synthase B (377 aa).

Asp-53 acts as the Nucleophile in catalysis.

The protein belongs to the pseudouridine synthase TruB family. Type 1 subfamily.

It catalyses the reaction uridine(55) in tRNA = pseudouridine(55) in tRNA. In terms of biological role, responsible for synthesis of pseudouridine from uracil-55 in the psi GC loop of transfer RNAs. In Tropheryma whipplei (strain Twist) (Whipple's bacillus), this protein is tRNA pseudouridine synthase B.